The sequence spans 538 residues: Putative cysteine ligase BshC (538 aa).

Residues 460 to 483 adopt a coiled-coil conformation; it reads KINEQIELLEKMLKRNVEKKHEVQ.

The protein belongs to the BshC family.

In terms of biological role, involved in bacillithiol (BSH) biosynthesis. May catalyze the last step of the pathway, the addition of cysteine to glucosamine malate (GlcN-Mal) to generate BSH. The chain is Putative cysteine ligase BshC from Bacillus mycoides (strain KBAB4) (Bacillus weihenstephanensis).